The chain runs to 115 residues: Ribonuclease P protein component (115 aa).

It belongs to the RnpA family. Consists of a catalytic RNA component (M1 or rnpB) and a protein subunit.

It carries out the reaction Endonucleolytic cleavage of RNA, removing 5'-extranucleotides from tRNA precursor.. Functionally, RNaseP catalyzes the removal of the 5'-leader sequence from pre-tRNA to produce the mature 5'-terminus. It can also cleave other RNA substrates such as 4.5S RNA. The protein component plays an auxiliary but essential role in vivo by binding to the 5'-leader sequence and broadening the substrate specificity of the ribozyme. The chain is Ribonuclease P protein component from Bacillus cereus (strain AH187).